Consider the following 203-residue polypeptide: MKQKLDRLLVQADIQLTERQKEQLIGFVHLLHKWNKAYNLTSVRDPEEMLVKHIMDSLVVSVHLQGQSFIDVGTGPGLPGIPLAIANPDKQFVLLDSLGKRITFIKQVLRELAITNVTPVLSRVEQYTARQFDGVLSRAFASLDDMLNWCYALPNDSGKFYALKGVYDGTELQAVQKPIKLVDAIKLNVPQLVGERHLIVLAK.

S-adenosyl-L-methionine is bound by residues Gly-73, Leu-78, Val-124–Glu-125, and Arg-138.

The protein belongs to the methyltransferase superfamily. RNA methyltransferase RsmG family.

The protein localises to the cytoplasm. It carries out the reaction guanosine(527) in 16S rRNA + S-adenosyl-L-methionine = N(7)-methylguanosine(527) in 16S rRNA + S-adenosyl-L-homocysteine. Specifically methylates the N7 position of guanine in position 527 of 16S rRNA. The chain is Ribosomal RNA small subunit methyltransferase G from Haemophilus ducreyi (strain 35000HP / ATCC 700724).